Consider the following 593-residue polypeptide: MATAASSITLTVLMGVLLVGVVAVLARLEDWRSYTPLSDVGGGLGERTGYTHEEKPGGIIRWFTTVDHKDIGILYGVYGTIAFAWGGVSVLLMRTELATSSETLISPSLYNGLLTSHGITMLFLFGTPMIAAFGNYFIPLLIDADDMAFPRINAIAFWLLPPGAILIWSGFLIPGIATAQTSWTMYTPLSLQMSSPAVDMMMLGLHLTGVSATMGAINFIATIFTERGEDVGWPDLDIFSWTMLTQSGLILFAFPLFGSALIMLLLDRNFGTTFFTVAGGDPIFWQHLFWFFGHPEVYVLVLPPMGIVSLILPKFSGRKLFGFKFVVYSTLAIGVLSFGVWAHHMFTTGIDPRIRSSFMAVSLAISIPSAVKVFNWITTMWNGKLRLTAPMLFCIGFVQNFIIGGVTGVFLAVIPIDLILHDTYYVVGHFHFIVYGAIGFALFAASYYWFPMVTGRMYQKRLAHAHFWTALVGSNATFLAMLWLGYGGMPRRYATYIPQFATAHRLATVGAFLIGVSTLIWLFNMATSWREGPRVDSTDPWDLEETDQFTNDWAWFRAKEETTVLPDGGDEAQSEADAVTDGGQPAADSDTES.

2 consecutive transmembrane segments (helical) span residues 5–25 (ASSI…VAVL) and 71–91 (IGIL…VSVL). H117 provides a ligand contact to Fe(II)-heme a. The next 6 membrane-spanning stretches (helical) occupy residues 122 to 142 (LFLF…PLLI), 154 to 174 (AIAF…FLIP), 204 to 224 (GLHL…ATIF), 246 to 266 (QSGL…MLLL), 288 to 308 (LFWF…MGIV), and 320 to 340 (LFGF…SFGV). Residues H294 and Y298 each contribute to the Cu cation site. Positions 294-298 (HPEVY) form a cross-link, 1'-histidyl-3'-tyrosine (His-Tyr). Residues H343 and H344 each coordinate Cu cation. The next 5 helical transmembrane spans lie at 358–378 (FMAV…NWIT), 401–421 (FIIG…LILH), 425–445 (YVVG…LFAA), 467–487 (FWTA…LGYG), and 506–526 (LATV…FNMA). A heme a3-binding site is contributed by H429. H431 contacts Fe(II)-heme a. The interval 562–593 (TTVLPDGGDEAQSEADAVTDGGQPAADSDTES) is disordered.

The protein belongs to the heme-copper respiratory oxidase family.

The protein localises to the cell membrane. It catalyses the reaction 4 Fe(II)-[cytochrome c] + O2 + 8 H(+)(in) = 4 Fe(III)-[cytochrome c] + 2 H2O + 4 H(+)(out). The protein operates within energy metabolism; oxidative phosphorylation. Cytochrome c oxidase is the component of the respiratory chain that catalyzes the reduction of oxygen to water. Subunits 1-3 form the functional core of the enzyme complex. CO I is the catalytic subunit of the enzyme. Electrons originating in cytochrome c are transferred via the copper A center of subunit 2 and heme A of subunit 1 to the bimetallic center formed by heme A3 and copper B. This is Cytochrome c oxidase polypeptide 1 (coxA2) from Halobacterium salinarum (strain ATCC 700922 / JCM 11081 / NRC-1) (Halobacterium halobium).